Consider the following 208-residue polypeptide: Small ribosomal subunit protein eS8 (208 aa).

Residues 1–34 (MGISRDHWHKRRATGGKRAPIRKKRKYELGRPAA) form a disordered region. Residues 7–26 (HWHKRRATGGKRAPIRKKRK) show a composition bias toward basic residues.

The protein belongs to the eukaryotic ribosomal protein eS8 family. As to quaternary structure, component of the small ribosomal subunit. Identified in a IGF2BP1-dependent mRNP granule complex containing untranslated mRNAs. Part of the small subunit (SSU) processome, composed of more than 70 proteins and the RNA chaperone small nucleolar RNA (snoRNA) U3.

It is found in the cytoplasm. The protein resides in the membrane. Its subcellular location is the nucleus. It localises to the nucleolus. Functionally, component of the small ribosomal subunit. The ribosome is a large ribonucleoprotein complex responsible for the synthesis of proteins in the cell. Part of the small subunit (SSU) processome, first precursor of the small eukaryotic ribosomal subunit. During the assembly of the SSU processome in the nucleolus, many ribosome biogenesis factors, an RNA chaperone and ribosomal proteins associate with the nascent pre-rRNA and work in concert to generate RNA folding, modifications, rearrangements and cleavage as well as targeted degradation of pre-ribosomal RNA by the RNA exosome. The sequence is that of Small ribosomal subunit protein eS8 (RpS8) from Spodoptera frugiperda (Fall armyworm).